The primary structure comprises 284 residues: L-ribulose-5-phosphate 3-epimerase UlaE (284 aa).

Belongs to the L-ribulose-5-phosphate 3-epimerase family.

The enzyme catalyses L-ribulose 5-phosphate = L-xylulose 5-phosphate. The protein operates within cofactor degradation; L-ascorbate degradation; D-xylulose 5-phosphate from L-ascorbate: step 3/4. Catalyzes the isomerization of L-xylulose-5-phosphate to L-ribulose-5-phosphate. Is involved in the anaerobic L-ascorbate utilization. This Escherichia coli O127:H6 (strain E2348/69 / EPEC) protein is L-ribulose-5-phosphate 3-epimerase UlaE.